Reading from the N-terminus, the 339-residue chain is Putative zinc metalloprotease CA_C1796 (339 aa).

Zn(2+) is bound at residue His-20. The active site involves Glu-21. His-24 contributes to the Zn(2+) binding site. The next 3 membrane-spanning stretches (helical) occupy residues 91 to 113 (LSIVIAGPIMNLILAAVLFCIVG), 275 to 297 (QLGVMNLLPIPALDGGFVFLFLF), and 310 to 330 (VGFVNTIGFALLMILMIVVTI). The PDZ domain occupies 99–177 (IMNLILAAVL…GIKLALKNNG (79 aa)).

The protein belongs to the peptidase M50B family. The cofactor is Zn(2+).

It localises to the cell membrane. The protein is Putative zinc metalloprotease CA_C1796 of Clostridium acetobutylicum (strain ATCC 824 / DSM 792 / JCM 1419 / IAM 19013 / LMG 5710 / NBRC 13948 / NRRL B-527 / VKM B-1787 / 2291 / W).